A 228-amino-acid chain; its full sequence is PKHD-type hydroxylase XCV3086 (228 aa).

One can recognise a Fe2OG dioxygenase domain in the interval 78–180; it reads RIYPPLFNRY…RVACFFWTQS (103 aa). Residues H96, D98, and H161 each coordinate Fe cation. Position 171 (R171) interacts with 2-oxoglutarate.

It depends on Fe(2+) as a cofactor. L-ascorbate serves as cofactor.

The polypeptide is PKHD-type hydroxylase XCV3086 (Xanthomonas euvesicatoria pv. vesicatoria (strain 85-10) (Xanthomonas campestris pv. vesicatoria)).